We begin with the raw amino-acid sequence, 446 residues long: Phosphoglucosamine mutase (446 aa).

Catalysis depends on Ser-103, which acts as the Phosphoserine intermediate. Mg(2+) is bound by residues Ser-103, Asp-242, Asp-244, and Asp-246. Position 103 is a phosphoserine (Ser-103).

The protein belongs to the phosphohexose mutase family. The cofactor is Mg(2+). Activated by phosphorylation.

It catalyses the reaction alpha-D-glucosamine 1-phosphate = D-glucosamine 6-phosphate. Catalyzes the conversion of glucosamine-6-phosphate to glucosamine-1-phosphate. This chain is Phosphoglucosamine mutase, found in Vibrio campbellii (strain ATCC BAA-1116).